A 511-amino-acid chain; its full sequence is LEM domain-containing protein 2 (511 aa).

An N-acetylalanine modification is found at Ala-2. One can recognise an LEM domain in the interval Ala-2 to Ala-42. Disordered stretches follow at residues Phe-18–Ser-110 and Gly-128–Thr-206. Residues Leu-38–Leu-80 are compositionally biased toward basic and acidic residues. The interval Leu-80–Pro-112 is interaction with lamin A/C complexes. The required for nuclear retention and interaction with LMNA isoform C stretch occupies residues Leu-80–Arg-141. 2 stretches are compositionally biased toward low complexity: residues Arg-81–Trp-94 and Ala-172–Ala-183. 2 consecutive transmembrane segments (helical) span residues Leu-221–Met-241 and Val-385–Leu-405. Residues Ile-403–Arg-511 are winged-Helix (WH). Residues Ser-505, Ser-507, and Ser-509 each carry the phosphoserine modification.

In terms of assembly, interacts (via N-terminus) with LMNA isoform C (via C-terminus) (in vitro). Interacts (via LEM domain) with BANF1. Interacts (via C-terminus) with CHMP7. Interacts (via N-terminus) with tubulin; the interaction causes microtubule bundling and stabilization (in vitro). Post-translationally, phosphorylated; strongly phosphorylated in mitosis compared to G1/S. In terms of tissue distribution, ubiquitously expressed, including liver, brain, heart, skeletal muscle, lung, testis, spleen, kidney and white adipose tissue.

It is found in the nucleus inner membrane. It localises to the nucleus envelope. The protein resides in the cytoplasm. The protein localises to the cytoskeleton. Its subcellular location is the spindle. Functionally, nuclear lamina-associated inner nuclear membrane protein that is involved in nuclear structure organization and maintenance of nuclear envelope (NE) integrity and NE reformation after mitosis. Plays a role as transmembrane adapter for the endosomal sorting complexes required for transport (ESCRT), and is thereby involved in ESCRT-mediated NE reformation. Promotes ESCRT-mediated NE closure by recruiting CHMP7 and downstream ESCRT-III proteins IST1/CHMP8 and CHMP2A to the reforming NE during anaphase. During nuclear reassembly, condenses into a liquid-like coating around microtubule spindles and coassembles with CHMP7 to form a macromolecular O-ring seal at the confluence between membranes, chromatin, and the spindle to facilitate early nuclear sealing. Plays a role in the organization of heterochromatin associated with the NE and in the maintenance of NE organization under mechanical stress. Required for embryonic development and is involved in regulation of several signaling pathways such as MAPK and AKT. Required for myoblast differentiation involving regulation of ERK signaling. Essential for cardiac homeostasis and proper heart function. This Mus musculus (Mouse) protein is LEM domain-containing protein 2 (Lemd2).